We begin with the raw amino-acid sequence, 277 residues long: NH(3)-dependent NAD(+) synthetase (277 aa).

36 to 43 (GLSGGIDS) contacts ATP. Mg(2+) is bound at residue Asp-42. Deamido-NAD(+) is bound at residue Arg-118. Thr-138 is an ATP binding site. Glu-143 serves as a coordination point for Mg(2+). ATP contacts are provided by Lys-167 and Ser-189.

It belongs to the NAD synthetase family. Homodimer.

The catalysed reaction is deamido-NAD(+) + NH4(+) + ATP = AMP + diphosphate + NAD(+) + H(+). The protein operates within cofactor biosynthesis; NAD(+) biosynthesis; NAD(+) from deamido-NAD(+) (ammonia route): step 1/1. In terms of biological role, catalyzes the ATP-dependent amidation of deamido-NAD to form NAD. Uses ammonia as a nitrogen source. In Pelodictyon phaeoclathratiforme (strain DSM 5477 / BU-1), this protein is NH(3)-dependent NAD(+) synthetase.